The sequence spans 306 residues: Dermonecrotic toxin LiSicTox-alphaIA1bi (306 aa).

An N-terminal signal peptide occupies residues 1-18 (MLPYIVLVLGCWSVLSQA). The propeptide occupies 19-26 (AQTDDEER). His-38 is an active-site residue. Glu-58 and Asp-60 together coordinate Mg(2+). The active-site Nucleophile is His-74. Disulfide bonds link Cys-78-Cys-84 and Cys-80-Cys-223. Asp-118 lines the Mg(2+) pocket.

Belongs to the arthropod phospholipase D family. Class II subfamily. Class IIa sub-subfamily. It depends on Mg(2+) as a cofactor. As to expression, expressed by the venom gland.

It localises to the secreted. It catalyses the reaction an N-(acyl)-sphingosylphosphocholine = an N-(acyl)-sphingosyl-1,3-cyclic phosphate + choline. It carries out the reaction an N-(acyl)-sphingosylphosphoethanolamine = an N-(acyl)-sphingosyl-1,3-cyclic phosphate + ethanolamine. The enzyme catalyses a 1-acyl-sn-glycero-3-phosphocholine = a 1-acyl-sn-glycero-2,3-cyclic phosphate + choline. The catalysed reaction is a 1-acyl-sn-glycero-3-phosphoethanolamine = a 1-acyl-sn-glycero-2,3-cyclic phosphate + ethanolamine. Dermonecrotic toxins cleave the phosphodiester linkage between the phosphate and headgroup of certain phospholipids (sphingolipid and lysolipid substrates), forming an alcohol (often choline) and a cyclic phosphate. This toxin acts on sphingomyelin (SM). The level of enzymatic activity is high according to Tambourgi and colleagues or low according to Felicori and colleagues. It may also act on ceramide phosphoethanolamine (CPE), lysophosphatidylcholine (LPC) and lysophosphatidylethanolamine (LPE), but not on lysophosphatidylserine (LPS), and lysophosphatidylglycerol (LPG). It acts by transphosphatidylation, releasing exclusively cyclic phosphate products as second products. It induces complement-dependent hemolysis, dermonecrosis, vascular permeability and platelet aggregation. Both C5a and the membrane attack complex may play a role in the induction of dermonecrosis. MMP-9 and MMP-2 produced by skin fibroblasts can also contribute to proteolytic tissue destruction. This Loxosceles intermedia (Brown spider) protein is Dermonecrotic toxin LiSicTox-alphaIA1bi.